Here is a 374-residue protein sequence, read N- to C-terminus: MMTDNSKTRVVVGMSGGVDSSVTALLLKEQGYDVIGVFMKNWDDTDEFGVCTATEDYKDVAAVADQIGIPYYSVNFEKEYWDRVFEYFLAEYRSGRTPNPDVMCNKEIKFKAFLDYAMTLGADYVATGHYAQIKRDENGVVHMLRGLDKGKDQTYFLSQLSQEQLQKTMFPLGHLQKSEVRAIAEQAGLATAKKKDSTGICFIGEKNFKTFLSHYLPAQKGRMMTVDGRDMGEHAGLMYYTIGQRGGLGIGGQQGGDNKPWFVVGKDLSQNILYVGQGFYHESLMSTSLDASVIQFTREVPEEFTLECTAKFRYRQPDSKVTVHVKKDKAKVVFAEPQRAITPGQAVVFYDGHECLGGGIIDMAYKDGEPCQYI.

ATP is bound by residues 13-20 (GMSGGVDS) and methionine 39. An interaction with target base in tRNA region spans residues 99–101 (NPD). The active-site Nucleophile is cysteine 104. An intrachain disulfide couples cysteine 104 to cysteine 201. Glycine 128 contributes to the ATP binding site. The tract at residues 151–153 (KDQ) is interaction with tRNA. The Cysteine persulfide intermediate role is filled by cysteine 201. The segment at 313–314 (RY) is interaction with tRNA.

Belongs to the MnmA/TRMU family.

It localises to the cytoplasm. It catalyses the reaction S-sulfanyl-L-cysteinyl-[protein] + uridine(34) in tRNA + AH2 + ATP = 2-thiouridine(34) in tRNA + L-cysteinyl-[protein] + A + AMP + diphosphate + H(+). Catalyzes the 2-thiolation of uridine at the wobble position (U34) of tRNA, leading to the formation of s(2)U34. This Streptococcus equi subsp. zooepidemicus (strain MGCS10565) protein is tRNA-specific 2-thiouridylase MnmA.